The chain runs to 243 residues: 1-(5-phosphoribosyl)-5-[(5-phosphoribosylamino)methylideneamino] imidazole-4-carboxamide isomerase (243 aa).

Asp-8 (proton acceptor) is an active-site residue. The active-site Proton donor is the Asp-130.

The protein belongs to the HisA/HisF family.

It is found in the cytoplasm. The catalysed reaction is 1-(5-phospho-beta-D-ribosyl)-5-[(5-phospho-beta-D-ribosylamino)methylideneamino]imidazole-4-carboxamide = 5-[(5-phospho-1-deoxy-D-ribulos-1-ylimino)methylamino]-1-(5-phospho-beta-D-ribosyl)imidazole-4-carboxamide. Its pathway is amino-acid biosynthesis; L-histidine biosynthesis; L-histidine from 5-phospho-alpha-D-ribose 1-diphosphate: step 4/9. This is 1-(5-phosphoribosyl)-5-[(5-phosphoribosylamino)methylideneamino] imidazole-4-carboxamide isomerase from Acinetobacter baylyi (strain ATCC 33305 / BD413 / ADP1).